A 236-amino-acid chain; its full sequence is Small ribosomal subunit protein eS6 (236 aa).

It belongs to the eukaryotic ribosomal protein eS6 family. Component of the small ribosomal subunit. Mature ribosomes consist of a small (40S) and a large (60S) subunit. The 40S subunit contains about 32 different proteins and 1 molecule of RNA (18S). The 60S subunit contains 45 different proteins and 3 molecules of RNA (25S, 5.8S and 5S).

It localises to the cytoplasm. In terms of biological role, component of the ribosome, a large ribonucleoprotein complex responsible for the synthesis of proteins in the cell. The small ribosomal subunit (SSU) binds messenger RNAs (mRNAs) and translates the encoded message by selecting cognate aminoacyl-transfer RNA (tRNA) molecules. The large subunit (LSU) contains the ribosomal catalytic site termed the peptidyl transferase center (PTC), which catalyzes the formation of peptide bonds, thereby polymerizing the amino acids delivered by tRNAs into a polypeptide chain. The nascent polypeptides leave the ribosome through a tunnel in the LSU and interact with protein factors that function in enzymatic processing, targeting, and the membrane insertion of nascent chains at the exit of the ribosomal tunnel. RPS6A is involved in nucleolar processing of pre-18S ribosomal RNA and ribosome assembly. The polypeptide is Small ribosomal subunit protein eS6 (RPS6A) (Candida albicans (strain SC5314 / ATCC MYA-2876) (Yeast)).